We begin with the raw amino-acid sequence, 126 residues long: Profilin-3 (126 aa).

It belongs to the profilin family. Occurs in many kinds of cells as a complex with monomeric actin in a 1:1 ratio.

The protein resides in the cytoplasm. Its subcellular location is the cytoskeleton. In terms of biological role, binds to actin and affects the structure of the cytoskeleton. At high concentrations, profilin prevents the polymerization of actin, whereas it enhances it at low concentrations. By binding to PIP2, it inhibits the formation of IP3 and DG. This is Profilin-3 (proC) from Dictyostelium discoideum (Social amoeba).